Here is a 178-residue protein sequence, read N- to C-terminus: Cytochrome b6-f complex iron-sulfur subunit (178 aa).

Residues 20–42 (LLTFGTATGVALGALYPVANYFM) traverse the membrane as a helical segment. The Rieske domain maps to 71-161 (NHPAGDRSLV…IDVEDDKVFV (91 aa)). Cys107, His109, Cys125, and His128 together coordinate [2Fe-2S] cluster. A disulfide bridge connects residues Cys112 and Cys127.

This sequence belongs to the Rieske iron-sulfur protein family. The 4 large subunits of the cytochrome b6-f complex are cytochrome b6, subunit IV (17 kDa polypeptide, PetD), cytochrome f and the Rieske protein, while the 4 small subunits are PetG, PetL, PetM and PetN. The complex functions as a dimer. It depends on [2Fe-2S] cluster as a cofactor.

The protein resides in the cellular thylakoid membrane. The catalysed reaction is 2 oxidized [plastocyanin] + a plastoquinol + 2 H(+)(in) = 2 reduced [plastocyanin] + a plastoquinone + 4 H(+)(out). Component of the cytochrome b6-f complex, which mediates electron transfer between photosystem II (PSII) and photosystem I (PSI), cyclic electron flow around PSI, and state transitions. The polypeptide is Cytochrome b6-f complex iron-sulfur subunit (Prochlorococcus marinus (strain MIT 9211)).